We begin with the raw amino-acid sequence, 175 residues long: ATP synthase subunit b 1 (175 aa).

Residues 26-48 form a helical membrane-spanning segment; sequence IINLAIIIGVLYVYGSKFIGNIL.

This sequence belongs to the ATPase B chain family. In terms of assembly, F-type ATPases have 2 components, F(1) - the catalytic core - and F(0) - the membrane proton channel. F(1) has five subunits: alpha(3), beta(3), gamma(1), delta(1), epsilon(1). F(0) has four main subunits: a(1), b(1), b'(1) and c(10-14). The alpha and beta chains form an alternating ring which encloses part of the gamma chain. F(1) is attached to F(0) by a central stalk formed by the gamma and epsilon chains, while a peripheral stalk is formed by the delta, b and b' chains.

The protein localises to the cellular thylakoid membrane. In terms of biological role, f(1)F(0) ATP synthase produces ATP from ADP in the presence of a proton or sodium gradient. F-type ATPases consist of two structural domains, F(1) containing the extramembraneous catalytic core and F(0) containing the membrane proton channel, linked together by a central stalk and a peripheral stalk. During catalysis, ATP synthesis in the catalytic domain of F(1) is coupled via a rotary mechanism of the central stalk subunits to proton translocation. Functionally, component of the F(0) channel, it forms part of the peripheral stalk, linking F(1) to F(0). The polypeptide is ATP synthase subunit b 1 (Picosynechococcus sp. (strain ATCC 27264 / PCC 7002 / PR-6) (Agmenellum quadruplicatum)).